The chain runs to 804 residues: Phenylalanine--tRNA ligase beta subunit (804 aa).

The region spanning 38–148 (RAAFRAFTIA…ENAPVGTSFA (111 aa)) is the tRNA-binding domain. Positions 401–476 (HTARVIDFPV…RIHGINRIDP (76 aa)) constitute a B5 domain. Mg(2+)-binding residues include aspartate 454, aspartate 460, glutamate 463, and glutamate 464. An FDX-ACB domain is found at 710–803 (SLFQSLKRDY…VAKQTGGVLR (94 aa)).

This sequence belongs to the phenylalanyl-tRNA synthetase beta subunit family. Type 1 subfamily. Tetramer of two alpha and two beta subunits. Mg(2+) serves as cofactor.

It localises to the cytoplasm. It carries out the reaction tRNA(Phe) + L-phenylalanine + ATP = L-phenylalanyl-tRNA(Phe) + AMP + diphosphate + H(+). This Brucella suis biovar 1 (strain 1330) protein is Phenylalanine--tRNA ligase beta subunit.